The primary structure comprises 753 residues: Pesticidal crystal protein Cry20Aa (753 aa).

A compositionally biased stretch (polar residues) spans 680 to 696; the sequence is DTTYQPSYDNYNQNASG. A disordered region spans residues 680–721; that stretch reads DTTYQPSYDNYNQNASGTYDDGYNPNASDSYDQSYTNNYSQN. The span at 712–721 shows a compositional bias: low complexity; it reads QSYTNNYSQN.

Belongs to the delta endotoxin family. Has low mosquitocidal activity probably due to rapid proteolysis to inactive 56 kDa and 43 kDa proteins.

Functionally, promotes colloidosmotic lysis by binding to the midgut epithelial cells of mosquitos. Active against Aedes aegypti and Culex quinquefasciatus larvae. The sequence is that of Pesticidal crystal protein Cry20Aa (cry20Aa) from Bacillus thuringiensis subsp. fukuokaensis.